Consider the following 288-residue polypeptide: Mycothiol S-conjugate amidase (288 aa).

Residues His12, Asp15, and His142 each contribute to the Zn(2+) site.

The protein belongs to the MshB deacetylase family. Mca subfamily. As to quaternary structure, monomer. The cofactor is Zn(2+).

It catalyses the reaction mycothiol S-conjugate + H2O = an N-acetyl-L-cysteine-S-conjugate + 1D-myo-inositol 2-amino-2-deoxy-alpha-D-glucopyranoside. With respect to regulation, partially inhibited by MSH when MSmB (a bimane derivative of MSH) is used as substrate. In terms of biological role, a mycothiol (MSH, N-acetyl-cysteinyl-glucosaminyl-inositol) S-conjugate amidase, it recycles conjugated MSH to the N-acetyl cysteine conjugate and the MSH precursor. Involved in MSH-dependent detoxification of a number of alkylating agents and antibiotics. Activity is specific for the mycothiol moiety. This chain is Mycothiol S-conjugate amidase, found in Mycolicibacterium smegmatis (strain ATCC 700084 / mc(2)155) (Mycobacterium smegmatis).